A 690-amino-acid polypeptide reads, in one-letter code: Proprotein convertase subtilisin/kexin type 9 (690 aa).

An N-terminal signal peptide occupies residues 1–28; that stretch reads MGTVRSRRLWWPLPLLLLLLRGPAGARA. The propeptide occupies 29–150; that stretch reads QEDDDGDYEE…IEEDSYVFAQ (122 aa). Y36 is modified (sulfotyrosine). S45 is subject to Phosphoserine. The region spanning 75 to 147 is the Inhibitor I9 domain; it reads TYVVVLKEET…VDYIEEDSYV (73 aa). The 307-residue stretch at 153–459 folds into the Peptidase S8 domain; that stretch reads PWNLERITPA…GWQLFCRTVW (307 aa). Catalysis depends on charge relay system residues D184 and H224. Disulfide bonds link C221–C253 and C321–C356. The active-site Charge relay system is the S384. The C-terminal domain stretch occupies residues 448-690; it reads GAGWQLFCRT…HLAQASQELQ (243 aa). 3 disulfides stabilise this stretch: C455/C525, C475/C524, and C484/C507. N531 carries an N-linked (GlcNAc...) asparagine glycan. 6 cysteine pairs are disulfide-bonded: C532/C599, C550/C598, C560/C586, C606/C677, C624/C676, and C633/C652. The residue at position 686 (S686) is a Phosphoserine.

It belongs to the peptidase S8 family. In terms of assembly, monomer. Can self-associate to form dimers and higher multimers which may have increased LDLR degrading activity. The precursor protein but not the mature protein may form multimers. Interacts with APOB, VLDLR, LRP8/APOER2 and BACE1. The full-length immature form (pro-PCSK9) interacts with SCNN1A, SCNN1B and SCNN1G. The pro-PCSK9 form (via C-terminal domain) interacts with LDLR. Interacts (via the C-terminal domain) with ANXA2 (via repeat Annexin 1); the interaction inhibits the degradation of LDLR. Requires Ca(2+) as cofactor. Post-translationally, cleavage by furin and PCSK5 generates a truncated inactive protein that is unable to induce LDLR degradation. Undergoes autocatalytic cleavage in the endoplasmic reticulum to release the propeptide from the N-terminus and the cleavage of the propeptide is strictly required for its maturation and activation. The cleaved propeptide however remains associated with the catalytic domain through non-covalent interactions, preventing potential substrates from accessing its active site. As a result, it is secreted from cells as a propeptide-containing, enzymatically inactive protein. In terms of processing, phosphorylation protects the propeptide against proteolysis.

The protein resides in the cytoplasm. It is found in the secreted. Its subcellular location is the endosome. The protein localises to the lysosome. It localises to the cell surface. The protein resides in the endoplasmic reticulum. It is found in the golgi apparatus. Its activity is regulated as follows. Its proteolytic activity is autoinhibited by the non-covalent binding of the propeptide to the catalytic domain. Inhibited by EGTA. Crucial player in the regulation of plasma cholesterol homeostasis. Binds to low-density lipid receptor family members: low density lipoprotein receptor (LDLR), very low density lipoprotein receptor (VLDLR), apolipoprotein E receptor (LRP1/APOER) and apolipoprotein receptor 2 (LRP8/APOER2), and promotes their degradation in intracellular acidic compartments. Acts via a non-proteolytic mechanism to enhance the degradation of the hepatic LDLR through a clathrin LDLRAP1/ARH-mediated pathway. May prevent the recycling of LDLR from endosomes to the cell surface or direct it to lysosomes for degradation. Can induce ubiquitination of LDLR leading to its subsequent degradation. Inhibits intracellular degradation of APOB via the autophagosome/lysosome pathway in a LDLR-independent manner. Involved in the disposal of non-acetylated intermediates of BACE1 in the early secretory pathway. Inhibits epithelial Na(+) channel (ENaC)-mediated Na(+) absorption by reducing ENaC surface expression primarily by increasing its proteasomal degradation. Regulates neuronal apoptosis via modulation of LRP8/APOER2 levels and related anti-apoptotic signaling pathways. The polypeptide is Proprotein convertase subtilisin/kexin type 9 (PCSK9) (Ateles geoffroyi (Black-handed spider monkey)).